We begin with the raw amino-acid sequence, 681 residues long: Sodium-dependent phosphate transporter 1 (681 aa).

A run of 6 helical transmembrane segments spans residues 25–45 (NLWM…SVGA), 66–86 (ACIL…AKVS), 106–126 (LMAG…VASF), 162–182 (IVMS…ILFF), 201–221 (ALPI…MYTG), and 234–254 (GTIL…WFFV). Positions 266-295 (VKSSPSESPLMEKKNNLKDHEETKMAPGDV) are disordered. Phosphoserine is present on residues serine 269 and serine 273. Positions 275–289 (LMEKKNNLKDHEETK) are enriched in basic and acidic residues. The next 4 membrane-spanning stretches (helical) occupy residues 513-533 (VSLL…FAHG), 561-581 (ATPI…LWVW), 602-622 (FSIE…GLPI), and 652-672 (IFMA…AIMA).

Belongs to the inorganic phosphate transporter (PiT) (TC 2.A.20) family. As to expression, ubiquitously expressed.

The protein localises to the cell membrane. It catalyses the reaction 2 Na(+)(out) + phosphate(out) = 2 Na(+)(in) + phosphate(in). Sodium-phosphate symporter which preferentially transports the monovalent form of phosphate with a stoichiometry of two sodium ions per phosphate ion. May play a role in extracellular matrix and cartilage calcification as well as in vascular calcification. Essential for cell proliferation but this function is independent of its phosphate transporter activity. The chain is Sodium-dependent phosphate transporter 1 (Slc20a1) from Rattus norvegicus (Rat).